The chain runs to 336 residues: Atypical chemokine receptor 1 (336 aa).

Topologically, residues 1–63 (MGNCLHQAEL…CNLLDDSSLP (63 aa)) are extracellular. Asparagine 16 and asparagine 33 each carry an N-linked (GlcNAc...) asparagine glycan. Disulfide bonds link cysteine 51–cysteine 276 and cysteine 129–cysteine 195. The chain crosses the membrane as a helical span at residues 64–84 (FFILASVLGILASSTVLFMLF). Residues 85–95 (RPLFRWQLCPG) lie on the Cytoplasmic side of the membrane. Residues 96–116 (WPVLAQLAVGSALFSIVVPIL) form a helical membrane-spanning segment. Residues 117-129 (APGLGNTRSSALC) are Extracellular-facing. The helical transmembrane segment at 130-153 (SLGYCVWYGSAFAQALLLGCHASL) threads the bilayer. Residues 154-166 (GPKLGAGQVPGLT) lie on the Cytoplasmic side of the membrane. Residues 167 to 187 (LGLTVGLWGAAALLTVPITLA) traverse the membrane as a helical segment. Topologically, residues 188 to 207 (SGASDGLCTPIYSTELKALQ) are extracellular. The helical transmembrane segment at 208 to 228 (ATHTVACFAIFVLLPLGLFGA) threads the bilayer. The Cytoplasmic segment spans residues 229–244 (KGVKKALGMGPGPWMT). The helical transmembrane segment at 245 to 265 (ILWIWFIFWWPHGVVLGLDFL) threads the bilayer. Over 266 to 287 (VRSKLLLLPTCLAQQVLDLLLN) the chain is Extracellular. Residues 288–308 (LAEALTIVHCVATPLLLALFC) traverse the membrane as a helical segment. The Cytoplasmic portion of the chain corresponds to 309-336 (HQATRTLLPSLPLPERWSSPVDTLGSKS).

The protein belongs to the G-protein coupled receptor 1 family. Atypical chemokine receptor subfamily.

It is found in the early endosome. The protein localises to the recycling endosome. It localises to the membrane. Functionally, atypical chemokine receptor that controls chemokine levels and localization via high-affinity chemokine binding that is uncoupled from classic ligand-driven signal transduction cascades, resulting instead in chemokine sequestration, degradation, or transcytosis. Also known as interceptor (internalizing receptor) or chemokine-scavenging receptor or chemokine decoy receptor. Has a promiscuous chemokine-binding profile, interacting with inflammatory chemokines of both the CXC and the CC subfamilies but not with homeostatic chemokines. Acts as a receptor for chemokines including CCL2, CCL5, CCL7, CCL11, CCL13, CCL14, CCL17, CXCL5, CXCL6, IL8/CXCL8, CXCL11, GRO, RANTES, MCP-1 and TARC. May regulate chemokine bioavailability and, consequently, leukocyte recruitment through two distinct mechanisms: when expressed in endothelial cells, it sustains the abluminal to luminal transcytosis of tissue-derived chemokines and their subsequent presentation to circulating leukocytes; when expressed in erythrocytes, serves as blood reservoir of cognate chemokines but also as a chemokine sink, buffering potential surges in plasma chemokine levels. The polypeptide is Atypical chemokine receptor 1 (ACKR1) (Sapajus apella (Brown-capped capuchin)).